The primary structure comprises 259 residues: Proteasome subunit beta type-4 (259 aa).

This sequence belongs to the peptidase T1B family. As to quaternary structure, the 26S proteasome consists of a 20S proteasome core and two 19S regulatory subunits. The 20S proteasome core is composed of 28 subunits that are arranged in four stacked rings, resulting in a barrel-shaped structure. The two end rings are each formed by seven alpha subunits, and the two central rings are each formed by seven beta subunits. The catalytic chamber with the active sites is on the inside of the barrel.

Its subcellular location is the cytoplasm. The protein resides in the nucleus. In terms of biological role, non-catalytic component of the proteasome, a multicatalytic proteinase complex which is characterized by its ability to cleave peptides with Arg, Phe, Tyr, Leu, and Glu adjacent to the leaving group at neutral or slightly basic pH. The proteasome has an ATP-dependent proteolytic activity. This is Proteasome subunit beta type-4 (psmB4-1) from Dictyostelium discoideum (Social amoeba).